The chain runs to 328 residues: Phosphate acyltransferase (328 aa).

This sequence belongs to the PlsX family. Homodimer. Probably interacts with PlsY.

Its subcellular location is the cytoplasm. It carries out the reaction a fatty acyl-[ACP] + phosphate = an acyl phosphate + holo-[ACP]. It participates in lipid metabolism; phospholipid metabolism. Functionally, catalyzes the reversible formation of acyl-phosphate (acyl-PO(4)) from acyl-[acyl-carrier-protein] (acyl-ACP). This enzyme utilizes acyl-ACP as fatty acyl donor, but not acyl-CoA. The chain is Phosphate acyltransferase from Campylobacter jejuni subsp. jejuni serotype O:2 (strain ATCC 700819 / NCTC 11168).